The primary structure comprises 350 residues: 3-dehydroquinate synthase (350 aa).

NAD(+) contacts are provided by residues 106-110 (GVIGD), 130-131 (TS), lysine 143, and lysine 152. Residues glutamate 185, histidine 246, and histidine 263 each contribute to the Zn(2+) site.

This sequence belongs to the sugar phosphate cyclases superfamily. Dehydroquinate synthase family. Requires Co(2+) as cofactor. Zn(2+) serves as cofactor. The cofactor is NAD(+).

Its subcellular location is the cytoplasm. It catalyses the reaction 7-phospho-2-dehydro-3-deoxy-D-arabino-heptonate = 3-dehydroquinate + phosphate. The protein operates within metabolic intermediate biosynthesis; chorismate biosynthesis; chorismate from D-erythrose 4-phosphate and phosphoenolpyruvate: step 2/7. Its function is as follows. Catalyzes the conversion of 3-deoxy-D-arabino-heptulosonate 7-phosphate (DAHP) to dehydroquinate (DHQ). In Clostridium beijerinckii (strain ATCC 51743 / NCIMB 8052) (Clostridium acetobutylicum), this protein is 3-dehydroquinate synthase.